We begin with the raw amino-acid sequence, 263 residues long: 3'-5' ssDNA/RNA exonuclease TatD (263 aa).

The a divalent metal cation site is built by E91, H127, and H152.

The protein belongs to the metallo-dependent hydrolases superfamily. TatD-type hydrolase family. TatD subfamily. In terms of assembly, monomer. It depends on Mg(2+) as a cofactor.

It is found in the cytoplasm. 3'-5' exonuclease that prefers single-stranded DNA and RNA. May play a role in the H(2)O(2)-induced DNA damage repair. This Citrobacter rodentium (strain ICC168) (Citrobacter freundii biotype 4280) protein is 3'-5' ssDNA/RNA exonuclease TatD.